A 335-amino-acid polypeptide reads, in one-letter code: Zinc finger protein CO3 (335 aa).

Zn(2+) is bound by residues cysteine 15, cysteine 18, cysteine 38, and histidine 43. The B box-type; atypical zinc-finger motif lies at 15–57; the sequence is CDSCRSAPCAFYCLADSAALCATCDADVHSVNPLARRHRRVPM. The tract at residues 141 to 179 is disordered; it reads AGEKEDASSSKDCSSSHGKSSEGSHEFAVPGEPVPERQG. The 43-residue stretch at 268–310 folds into the CCT domain; sequence REARVHRYREKRKTRRFEKTIRYASRKAYAETRPRIKGRFAKR.

The protein belongs to the CONSTANS family.

It is found in the nucleus. Probable transcription factor involved in the regulation of flowering time under short day (SD) conditions. Functions as a repressor of flowering under SD conditions, independently of HD1, EHD1, MADS50 and MADS51. Controls flowering time under SD conditions by negatively regulating the expression of HD3A and FTL. The polypeptide is Zinc finger protein CO3 (Oryza sativa subsp. japonica (Rice)).